Consider the following 536-residue polypeptide: Plasmepsin V (536 aa).

Positions 1–34 (MVGASLGPPGRGSLSRLIRLVICVLTLCALSVQG) are cleaved as a signal peptide. Residues 35–492 (RSESTEGHSK…RKDNIFLKIP (458 aa)) are Lumenal-facing. The Peptidase A1 domain maps to 62-462 (YFLDIDIGTP…DIQKNRIGFV (401 aa)). D80 is an active-site residue. Disulfide bonds link C90–C172, C93–C96, C117–C128, C122–C133, C220–C466, C337–C382, and C391–C427. Positions 244–258 (SKSVSGQGSGPVSES) are enriched in low complexity. Positions 244 to 264 (SKSVSGQGSGPVSESLSESGE) are disordered. D313 is a catalytic residue. Residues 493-513 (FFYLYSLFVVFALSVLLSLVF) traverse the membrane as a helical segment. At 514–536 (YVRRLYHMEYSPLPSEGKAPADA) the chain is on the cytoplasmic side.

It belongs to the peptidase A1 family. In terms of assembly, component of a complex composed of SPC25 and PMV; the interaction is mediated via the transmembrane domains. The complex interacts with the SEC61 channel-forming translocon complex and is involved in the recognition and import of PEXEL motif-containing proteins into the ER for subsequent export. Post-translationally, it is not clear if the zymogen has a cleavable propeptide. Cleavage of the putative propeptide is dispensable for catalytic activity.

It is found in the endoplasmic reticulum membrane. Inhibited by peptidomimetic inhibitors such as WEHI-842. Functionally, during the asexual blood stage, plays an essential role in the export of several proteins into the host erythrocytes by cleaving the pentameric localization motif RxLxE/Q/D (termed Plasmodium export element (PEXEL)) located downstream of the N-terminal secretory signal sequence. Specifically, cleaves after the leucine residue in the RxLxE/Q/D (or RxLxxE) motif of exported proteins including EMP1. Also, by regulating protein export, plays an essential role in gametocyte development and thus parasite transmission to the mosquito vector. The protein is Plasmepsin V of Plasmodium vivax (strain Salvador I).